The following is a 620-amino-acid chain: 1-deoxy-D-xylulose-5-phosphate synthase (620 aa).

Thiamine diphosphate contacts are provided by residues His-80 and 121–123 (GHS). Asp-152 contacts Mg(2+). Thiamine diphosphate is bound by residues 153–154 (GA), Asn-181, Tyr-288, and Glu-370. Asn-181 contacts Mg(2+).

Belongs to the transketolase family. DXPS subfamily. Homodimer. It depends on Mg(2+) as a cofactor. The cofactor is thiamine diphosphate.

It catalyses the reaction D-glyceraldehyde 3-phosphate + pyruvate + H(+) = 1-deoxy-D-xylulose 5-phosphate + CO2. The protein operates within metabolic intermediate biosynthesis; 1-deoxy-D-xylulose 5-phosphate biosynthesis; 1-deoxy-D-xylulose 5-phosphate from D-glyceraldehyde 3-phosphate and pyruvate: step 1/1. Catalyzes the acyloin condensation reaction between C atoms 2 and 3 of pyruvate and glyceraldehyde 3-phosphate to yield 1-deoxy-D-xylulose-5-phosphate (DXP). In Klebsiella pneumoniae subsp. pneumoniae (strain ATCC 700721 / MGH 78578), this protein is 1-deoxy-D-xylulose-5-phosphate synthase.